We begin with the raw amino-acid sequence, 110 residues long: Cytochrome c6 (110 aa).

The signal sequence occupies residues 1-25; that stretch reads MKKKLSVLFTVFSFFVIGFAQIAFA. Heme c is bound by residues cysteine 39, cysteine 42, histidine 43, and methionine 83.

This sequence belongs to the cytochrome c family. PetJ subfamily. In terms of assembly, monomer. Post-translationally, binds 1 heme c group covalently per subunit.

The protein resides in the plastid. It is found in the chloroplast thylakoid lumen. Functionally, functions as an electron carrier between membrane-bound cytochrome b6-f and photosystem I in oxygenic photosynthesis. The protein is Cytochrome c6 (petJ) of Pyropia yezoensis (Susabi-nori).